The chain runs to 218 residues: uncharacterized protein (218 aa).

Composition is skewed to polar residues over residues 1–21 (MSSQ…SSEF) and 68–102 (LNTS…SSDI). 3 disordered regions span residues 1–39 (MSSQ…RHAS), 63–116 (EKRL…STSG), and 170–205 (GAKR…GTPQ). Positions 183–195 (KRQEKQSPLESRH) are enriched in basic and acidic residues.

This is an uncharacterized protein from Caenorhabditis elegans.